Consider the following 152-residue polypeptide: Methylglyoxal synthase (152 aa).

The region spanning 6–152 (RTLATEKNIA…YEGYLKERLK (147 aa)) is the MGS-like domain. Substrate is bound by residues His19, Lys23, 45–48 (TGTT), and 65–66 (SG). Asp71 serves as the catalytic Proton donor/acceptor. His98 provides a ligand contact to substrate.

This sequence belongs to the methylglyoxal synthase family.

It catalyses the reaction dihydroxyacetone phosphate = methylglyoxal + phosphate. In terms of biological role, catalyzes the formation of methylglyoxal from dihydroxyacetone phosphate. This is Methylglyoxal synthase from Proteus mirabilis (strain HI4320).